We begin with the raw amino-acid sequence, 509 residues long: Putative ATP-dependent RNA helicase QP509L (509 aa).

The Helicase ATP-binding domain occupies 110–262; the sequence is KKLLSPYGRF…KIILHHLGQP (153 aa). Residue 123–130 participates in ATP binding; sequence LNTGLGKT. The DEAH box signature appears at 215 to 218; the sequence is DEAH.

The protein belongs to the DEAD box helicase family. DEAH subfamily.

It catalyses the reaction ATP + H2O = ADP + phosphate + H(+). The polypeptide is Putative ATP-dependent RNA helicase QP509L (Ornithodoros (relapsing fever ticks)).